The following is an 803-amino-acid chain: Spondin-1 (803 aa).

An N-terminal signal peptide occupies residues 1–23 (MGLIFQPLFWQYVATSYALMVLG). The 167-residue stretch at 24–190 (FLDETVEKAI…DLTLEGGNEK (167 aa)) folds into the Reelin domain. 14 disulfide bridges follow: Cys39–Cys124, Cys152–Cys178, Cys195–Cys331, Cys196–Cys335, Cys198–Cys409, Cys437–Cys474, Cys448–Cys483, Cys453–Cys488, Cys496–Cys532, Cys507–Cys511, Cys542–Cys548, Cys553–Cys589, Cys564–Cys568, and Cys599–Cys604. The 193-residue stretch at 191–383 (TIPDCCACGT…LTSLDHPQSP (193 aa)) folds into the Spondin domain. Asn210 carries an N-linked (GlcNAc...) asparagine glycan. Residues Asp320, Asp349, and Asp353 each contribute to the Ca(2+) site. A disordered region spans residues 353–389 (DSGVTYESPNKPTIPQDKIRPLTSLDHPQSPSMTRGG). Residues 354–365 (SGVTYESPNKPT) are compositionally biased toward polar residues. TSP type-1 domains are found at residues 436 to 489 (TCIY…PGCS), 495 to 549 (TCMM…EECE), 552 to 605 (SCIV…PECH), 608 to 662 (PCVL…PECP), and 664 to 717 (SCEL…RKCQ). Residue Asn677 is glycosylated (N-linked (GlcNAc...) asparagine). The tract at residues 722 to 741 (NERRHLKDAREKRRSEKIKE) is disordered. Positions 750-802 (VCKMKPWTAWTECTKFCGGGIQERFMTVKKRFKSSQFTSCKDKKEIRACNVHP) constitute a TSP type-1 6 domain.

In terms of tissue distribution, expressed at high levels in the floor plate.

Its subcellular location is the secreted. It localises to the extracellular space. It is found in the extracellular matrix. Promotes the attachment of spinal cord and sensory neuron cells and the outgrowth of neurites in vitro. May contribute to the growth and guidance of axons in both the spinal cord and the PNS. The protein is Spondin-1 (spon1) of Xenopus laevis (African clawed frog).